The primary structure comprises 288 residues: NGG1-interacting factor 3 (288 aa).

It belongs to the GTP cyclohydrolase I type 2/NIF3 family. In terms of assembly, may interact with NGG1.

The protein resides in the mitochondrion. This chain is NGG1-interacting factor 3, found in Saccharomyces cerevisiae (strain ATCC 204508 / S288c) (Baker's yeast).